Consider the following 108-residue polypeptide: Large ribosomal subunit protein uL24 (108 aa).

It belongs to the universal ribosomal protein uL24 family. In terms of assembly, part of the 50S ribosomal subunit.

In terms of biological role, one of two assembly initiator proteins, it binds directly to the 5'-end of the 23S rRNA, where it nucleates assembly of the 50S subunit. Functionally, one of the proteins that surrounds the polypeptide exit tunnel on the outside of the subunit. The sequence is that of Large ribosomal subunit protein uL24 from Mycoplasma genitalium (strain ATCC 33530 / DSM 19775 / NCTC 10195 / G37) (Mycoplasmoides genitalium).